The primary structure comprises 109 residues: Cytochrome c-550 (109 aa).

The heme c site is built by Cys-13, Cys-16, His-17, and Met-79.

Post-translationally, binds 1 heme c group covalently per subunit.

This chain is Cytochrome c-550, found in Nitrobacter winogradskyi (Nitrobacter agilis).